Here is a 282-residue protein sequence, read N- to C-terminus: ATP synthase gamma chain (282 aa).

This sequence belongs to the ATPase gamma chain family. In terms of assembly, F-type ATPases have 2 components, CF(1) - the catalytic core - and CF(0) - the membrane proton channel. CF(1) has five subunits: alpha(3), beta(3), gamma(1), delta(1), epsilon(1). CF(0) has three main subunits: a, b and c. In this bacterium the a and b subunits are transcribed but do not seem to be translated, thus the ATP synthase consists of the alpha, beta, gamma, delta, epsilon and c subunits.

It is found in the cell membrane. Produces ATP from ADP in the presence of a proton gradient across the membrane. The gamma chain is believed to be important in regulating ATPase activity and the flow of protons through the CF(0) complex. In Moorella thermoacetica (strain ATCC 39073 / JCM 9320), this protein is ATP synthase gamma chain.